A 1332-amino-acid polypeptide reads, in one-letter code: Xanthine dehydrogenase/oxidase (1332 aa).

One can recognise a 2Fe-2S ferredoxin-type domain in the interval 4 to 91 (DELVFFVNGK…HVAVTTVEGI (88 aa)). [2Fe-2S] cluster-binding residues include Cys-43, Cys-48, Cys-51, Cys-73, Cys-113, Cys-116, Cys-148, and Cys-150. Residues 229 to 414 (FEGERVTWIQ…LSIEIPYSRE (186 aa)) enclose the FAD-binding PCMH-type domain. FAD-binding positions include 257-264 (LVVGNTEI), Phe-337, 347-351 (SLGGN), Asp-360, Leu-404, and Lys-422. A disulfide bridge connects residues Cys-535 and Cys-992. Mo-molybdopterin-binding residues include Gln-767 and Phe-798. Positions 802 and 880 each coordinate substrate. Arg-912 serves as a coordination point for Mo-molybdopterin. Positions 914 and 1010 each coordinate substrate. Ala-1079 lines the Mo-molybdopterin pocket. The active-site Proton acceptor is the Glu-1261.

This sequence belongs to the xanthine dehydrogenase family. In terms of assembly, homodimer. Interacts with BTN1A1. [2Fe-2S] cluster is required as a cofactor. FAD serves as cofactor. Requires Mo-molybdopterin as cofactor. Post-translationally, subject to partial proteolysis; this alters the enzyme from the dehydrogenase form (D) to the oxidase form (O). Contains sulfhydryl groups that are easily oxidized (in vitro); this alters the enzyme from the dehydrogenase form (D) to the oxidase form (O). As to expression, detected in milk (at protein level).

The protein resides in the cytoplasm. The protein localises to the peroxisome. Its subcellular location is the secreted. The enzyme catalyses xanthine + NAD(+) + H2O = urate + NADH + H(+). It catalyses the reaction hypoxanthine + NAD(+) + H2O = xanthine + NADH + H(+). It carries out the reaction xanthine + O2 + H2O = urate + H2O2. With respect to regulation, can be converted from the dehydrogenase form (D) to the oxidase form (O) irreversibly by proteolysis or reversibly through the oxidation of sulfhydryl groups. Key enzyme in purine degradation. Catalyzes the oxidation of hypoxanthine to xanthine. Catalyzes the oxidation of xanthine to uric acid. Contributes to the generation of reactive oxygen species. The protein is Xanthine dehydrogenase/oxidase (XDH) of Bos taurus (Bovine).